We begin with the raw amino-acid sequence, 387 residues long: Pepsin A (387 aa).

Positions 1–16 (MKKLLLLLGLVALSEC) are cleaved as a signal peptide. Positions 17 to 61 (LYKVPLVKKKSLRQNLIENGLLKDFLAKHNVNPASKYFPTEAATE) are cleaved as a propeptide — activation peptide. A Peptidase A1 domain is found at 75–384 (YFGTIGIGTP…DRGNNRVGLA (310 aa)). Residue Asp-93 is part of the active site. Cys-106 and Cys-111 are disulfide-bonded. Residue Ser-129 is modified to Phosphoserine. Cys-267 and Cys-271 are disulfide-bonded. Asp-276 is a catalytic residue. Cys-310 and Cys-343 are oxidised to a cystine.

The protein belongs to the peptidase A1 family.

It is found in the secreted. It catalyses the reaction Preferential cleavage: hydrophobic, preferably aromatic, residues in P1 and P1' positions. Cleaves 1-Phe-|-Val-2, 4-Gln-|-His-5, 13-Glu-|-Ala-14, 14-Ala-|-Leu-15, 15-Leu-|-Tyr-16, 16-Tyr-|-Leu-17, 23-Gly-|-Phe-24, 24-Phe-|-Phe-25 and 25-Phe-|-Tyr-26 bonds in the B chain of insulin.. Its function is as follows. Shows particularly broad specificity; although bonds involving phenylalanine and leucine are preferred, many others are also cleaved to some extent. The sequence is that of Pepsin A (PGA) from Suncus murinus (Asian house shrew).